The following is a 214-amino-acid chain: Adenylate kinase (214 aa).

10–15 (GAGKGT) serves as a coordination point for ATP. The segment at 30–59 (STGDMLRAAVKAGTPLGLEAKKVMDAGQLV) is NMP. Residues Thr31, Arg36, 57-59 (QLV), 85-88 (GFPR), and Gln92 each bind AMP. Residues 122–159 (GRRVHPGSGRVYHIVFNQPKVEGKDDVTGEDLAIRPDD) are LID. Residues Arg123 and 132–133 (VY) contribute to the ATP site. AMP is bound by residues Arg156 and Arg167. An ATP-binding site is contributed by Gln200.

The protein belongs to the adenylate kinase family. Monomer.

It is found in the cytoplasm. The catalysed reaction is AMP + ATP = 2 ADP. The protein operates within purine metabolism; AMP biosynthesis via salvage pathway; AMP from ADP: step 1/1. Its function is as follows. Catalyzes the reversible transfer of the terminal phosphate group between ATP and AMP. Plays an important role in cellular energy homeostasis and in adenine nucleotide metabolism. The protein is Adenylate kinase of Shewanella piezotolerans (strain WP3 / JCM 13877).